The following is a 466-amino-acid chain: Cysteine--tRNA ligase (466 aa).

C29 provides a ligand contact to Zn(2+). The short motif at 31 to 41 is the 'HIGH' region element; sequence ATVQAPPHIGH. C211, H236, and E240 together coordinate Zn(2+). Positions 267 to 271 match the 'KMSKS' region motif; it reads KMSKS. Position 270 (K270) interacts with ATP.

Belongs to the class-I aminoacyl-tRNA synthetase family. In terms of assembly, monomer. Zn(2+) is required as a cofactor.

The protein localises to the cytoplasm. It carries out the reaction tRNA(Cys) + L-cysteine + ATP = L-cysteinyl-tRNA(Cys) + AMP + diphosphate. In Thermobifida fusca (strain YX), this protein is Cysteine--tRNA ligase.